The primary structure comprises 762 residues: Phosphoribosylformylglycinamidine synthase subunit PurL (762 aa).

H58 is an active-site residue. Positions 61 and 105 each coordinate ATP. Mg(2+) is bound at residue E107. Residues 108–111 (SHNH) and R130 each bind substrate. H109 acts as the Proton acceptor in catalysis. D131 lines the Mg(2+) pocket. Q255 is a substrate binding site. D283 is a binding site for Mg(2+). A substrate-binding site is contributed by 327 to 329 (ESQ). 2 residues coordinate ATP: N513 and G550. Mg(2+) is bound at residue N551. Position 553 (S553) interacts with substrate.

It belongs to the FGAMS family. As to quaternary structure, monomer. Part of the FGAM synthase complex composed of 1 PurL, 1 PurQ and 2 PurS subunits.

Its subcellular location is the cytoplasm. The catalysed reaction is N(2)-formyl-N(1)-(5-phospho-beta-D-ribosyl)glycinamide + L-glutamine + ATP + H2O = 2-formamido-N(1)-(5-O-phospho-beta-D-ribosyl)acetamidine + L-glutamate + ADP + phosphate + H(+). It functions in the pathway purine metabolism; IMP biosynthesis via de novo pathway; 5-amino-1-(5-phospho-D-ribosyl)imidazole from N(2)-formyl-N(1)-(5-phospho-D-ribosyl)glycinamide: step 1/2. Functionally, part of the phosphoribosylformylglycinamidine synthase complex involved in the purines biosynthetic pathway. Catalyzes the ATP-dependent conversion of formylglycinamide ribonucleotide (FGAR) and glutamine to yield formylglycinamidine ribonucleotide (FGAM) and glutamate. The FGAM synthase complex is composed of three subunits. PurQ produces an ammonia molecule by converting glutamine to glutamate. PurL transfers the ammonia molecule to FGAR to form FGAM in an ATP-dependent manner. PurS interacts with PurQ and PurL and is thought to assist in the transfer of the ammonia molecule from PurQ to PurL. The polypeptide is Phosphoribosylformylglycinamidine synthase subunit PurL (Corynebacterium glutamicum (strain R)).